The primary structure comprises 612 residues: UvrABC system protein C (612 aa).

A GIY-YIG domain is found at 13–92; the sequence is AKPGVYIMHD…IKEHRPKYNT (80 aa). The region spanning 204–239 is the UVR domain; it reads KKIMDRLTTQMQEASEKMEYEEAARYRDLLMSVKQV.

It belongs to the UvrC family. Interacts with UvrB in an incision complex.

The protein resides in the cytoplasm. Functionally, the UvrABC repair system catalyzes the recognition and processing of DNA lesions. UvrC both incises the 5' and 3' sides of the lesion. The N-terminal half is responsible for the 3' incision and the C-terminal half is responsible for the 5' incision. The chain is UvrABC system protein C from Lachnospira eligens (strain ATCC 27750 / DSM 3376 / VPI C15-48 / C15-B4) (Eubacterium eligens).